A 485-amino-acid polypeptide reads, in one-letter code: MFS-type transporter phm3 (485 aa).

The disordered stretch occupies residues 1–22 (MSLQDPTKEHNNTSPSPKDEKT). A run of 12 helical transmembrane segments spans residues 55-75 (FTLY…LLVA), 83-103 (IVAS…PFLL), 113-133 (LWLY…CALS), 144-164 (FICG…IADL), 175-195 (ALFG…GGFV), 203-223 (WTFY…AVIM), 278-298 (PIVL…YLLF), 317-337 (GLAF…FAIL), 357-377 (LVLM…YGWS), 384-404 (WIVP…ILMP), 421-441 (ALAV…LAGP), and 449-469 (LGWG…VPFV).

Belongs to the major facilitator superfamily.

It is found in the cell membrane. MFS-type transporter; part of the gene cluster that mediates the biosynthesis of the trans-fused decalin-containing tetramic acid phomasetin. This is MFS-type transporter phm3 from Pyrenochaetopsis sp.